A 98-amino-acid chain; its full sequence is NADH-ubiquinone oxidoreductase chain 4L (98 aa).

The next 3 helical transmembrane spans lie at 1–21 (MMSI…GVLI), 28–48 (STLL…ALII), and 59–79 (APLI…ALLV).

This sequence belongs to the complex I subunit 4L family. Core subunit of respiratory chain NADH dehydrogenase (Complex I) which is composed of 45 different subunits.

It localises to the mitochondrion inner membrane. The enzyme catalyses a ubiquinone + NADH + 5 H(+)(in) = a ubiquinol + NAD(+) + 4 H(+)(out). Core subunit of the mitochondrial membrane respiratory chain NADH dehydrogenase (Complex I) which catalyzes electron transfer from NADH through the respiratory chain, using ubiquinone as an electron acceptor. Part of the enzyme membrane arm which is embedded in the lipid bilayer and involved in proton translocation. This chain is NADH-ubiquinone oxidoreductase chain 4L (MT-ND4L), found in Lagostrophus fasciatus (Banded hare-wallaby).